The sequence spans 255 residues: tRNA pseudouridine synthase A (255 aa).

Aspartate 43 functions as the Nucleophile in the catalytic mechanism. Substrate is bound at residue tyrosine 94.

The protein belongs to the tRNA pseudouridine synthase TruA family.

It carries out the reaction uridine(38/39/40) in tRNA = pseudouridine(38/39/40) in tRNA. In terms of biological role, formation of pseudouridine at positions 38, 39 and 40 in the anticodon stem and loop of transfer RNAs. The chain is tRNA pseudouridine synthase A from Pyrobaculum neutrophilum (strain DSM 2338 / JCM 9278 / NBRC 100436 / V24Sta) (Thermoproteus neutrophilus).